Consider the following 386-residue polypeptide: Succinate--CoA ligase [ADP-forming] subunit beta (386 aa).

The 236-residue stretch at 9-244 (KEILRKYGVP…HDEEDPLETR (236 aa)) folds into the ATP-grasp domain. ATP is bound by residues Lys-46, 53 to 55 (GRG), Glu-99, Cys-102, and Glu-107. The Mg(2+) site is built by Asn-199 and Asp-213. Substrate contacts are provided by residues Asn-264 and 321-323 (GIM).

Belongs to the succinate/malate CoA ligase beta subunit family. In terms of assembly, heterotetramer of two alpha and two beta subunits. It depends on Mg(2+) as a cofactor.

The catalysed reaction is succinate + ATP + CoA = succinyl-CoA + ADP + phosphate. It carries out the reaction GTP + succinate + CoA = succinyl-CoA + GDP + phosphate. Its pathway is carbohydrate metabolism; tricarboxylic acid cycle; succinate from succinyl-CoA (ligase route): step 1/1. Its function is as follows. Succinyl-CoA synthetase functions in the citric acid cycle (TCA), coupling the hydrolysis of succinyl-CoA to the synthesis of either ATP or GTP and thus represents the only step of substrate-level phosphorylation in the TCA. The beta subunit provides nucleotide specificity of the enzyme and binds the substrate succinate, while the binding sites for coenzyme A and phosphate are found in the alpha subunit. In Rickettsia typhi (strain ATCC VR-144 / Wilmington), this protein is Succinate--CoA ligase [ADP-forming] subunit beta.